The chain runs to 1580 residues: Dynamin-binding protein (1580 aa).

Met1 carries the N-acetylmethionine modification. SH3 domains are found at residues 2 to 61 (EPGS…IVTI), 66 to 127 (EGER…ELCL), and 146 to 205 (YSLG…LLGP). Disordered stretches follow at residues 211–245 (ESVN…DQQS), 304–446 (NRTE…LVPL), 500–546 (YAQK…DSLD), and 589–688 (RGSS…AQTF). The span at 229–243 (VPPEEAESGGDEDDQ) shows a compositional bias: acidic residues. The region spanning 244–303 (QSGTYGIALYRFQALETNELDFEVGDRIQILGTLEDGWLEGCLKGKTGVFPHRFVKLCPS) is the SH3 4 domain. Composition is skewed to polar residues over residues 422–439 (QKSQ…TSDP) and 502–513 (QKHQTSTENTAS). Basic and acidic residues predominate over residues 516–527 (DPPERPERRPGL). Over residues 608–617 (RPPPPRPRTP) the composition is skewed to pro residues. Basic and acidic residues predominate over residues 671-682 (APEKEDSEHMEK). Position 683 is a phosphoserine (Ser683). Residues 694–755 (LARIRDVEQD…LELQQLRDMT (62 aa)) adopt a coiled-coil conformation. One can recognise a DH domain in the interval 783–970 (KRAKVVAELL…KEINVNINEY (188 aa)). Positions 1011 to 1220 (LKHLTGFAPQ…LKATDREGNL (210 aa)) constitute a BAR domain. One can recognise an SH3 5 domain in the interval 1288–1351 (PPEKLFHVQR…YSSFLKPYNP (64 aa)). Residues 1356 to 1365 (SDASVASHSS) show a composition bias toward low complexity. Disordered stretches follow at residues 1356–1384 (SDAS…NSHS) and 1426–1514 (TGHP…GSSE). The span at 1426-1440 (TGHPETGPSTCSSDP) shows a compositional bias: polar residues. An SH3 6 domain is found at 1516–1579 (EGNQVYFAIY…PSNYIRKTEY (64 aa)).

In terms of assembly, binds DNM1 via its N-terminal SH3 domains. The C-terminal SH3 domain binds a complex containing actin, tubulin, Hsp70 and actin-regulatory proteins, such as ENAH, EVL, WIRE, CR16, WAVE1 and NAP1L1. Interacts with FASLG. Interacts (via SH3 domain 6) with WASL. Interacts (via SH3 domain 6) interacts with ENAH. Interacts (via C-terminal domain) with TJP1; required for the apical cell-cell junction localization of DNMBP.

It localises to the cytoplasm. The protein resides in the golgi apparatus. The protein localises to the golgi stack. Its subcellular location is the cytoskeleton. It is found in the synapse. It localises to the cell junction. Functionally, plays a critical role as a guanine nucleotide exchange factor (GEF) for CDC42 in several intracellular processes associated with the actin and microtubule cytoskeleton. Regulates the structure of apical junctions in epithelial cells. Participates in the normal lumenogenesis of epithelial cell cysts by regulating spindle orientation. Plays a role in ciliogenesis. May play a role in membrane trafficking between the cell surface and the Golgi. This is Dynamin-binding protein from Mus musculus (Mouse).